The primary structure comprises 692 residues: Ribonuclease J (692 aa).

The segment at 1–91 (MTDNNQNNEN…RNYAKEELDN (91 aa)) is disordered. Over residues 9 to 25 (ENHENSSENSKDHHEAR) the composition is skewed to basic and acidic residues. A compositionally biased stretch (basic residues) spans 57-79 (HHKKEHRPNKKPNNHHKPKHASQ). N6-acetyllysine occurs at positions 135 and 141. Zn(2+)-binding residues include H209, H211, D213, H214, H278, and D300. K324, K338, and K398 each carry N6-acetyllysine. Residue 501-505 (HVSGH) coordinates substrate. K512 bears the N6-acetyllysine mark. H527 serves as a coordination point for Zn(2+). N6-acetyllysine occurs at positions 548, 635, and 650.

The protein belongs to the metallo-beta-lactamase superfamily. RNA-metabolizing metallo-beta-lactamase-like family. Bacterial RNase J subfamily. As to quaternary structure, homodimer. Homotetramer; dimer of homodimers. Interacts with RNA helicase RhpA, might be a member of a minimal RNA degradosome complex. Zn(2+) is required as a cofactor. Post-translationally, acetylated on nine lysine residues. Some of the residues are acetylated by multiple different mechanisms. RimL is partially responsible for the acetylation of Lys-324, Lys-398 and Lys-650. HPB8_1270 homolog is partially responsible for the acetylation of Lys-324, Lys-398, Lys-512 and Lys-650. Acetyl-phosphate-mediated non-enzymatic acetylation pathway takes part in the acetylation of Lys-135, Lys-324, Lys-398, Lys-512 and Lys-650. Acetylation of the remaining residues Lys-141, Lys-338, Lys-548 and Lys-635 occurs by a yet undetermined mechanism. Acetylation on a number of these residues is important for growth regulation and proper cell morphology.

It is found in the cytoplasm. Its activity is regulated as follows. Catalytic activity is regulated by the balance between homodimers and homotetramers, with homotetramers being the active forms of this enzyme. Acetylation allosterically regulates the homooligomerization state and hence the catalytic activity. An RNase that has 5'-3' exoribonuclease and endoribonuclease activity. Degrades 5'-monophosphorylated ssRNA and dsRNA, considerably more active on ssRNA. Association with RhpA significantly increases the dsRNase activity. Degrades RNA substrate with hairpin structures at both ends with low activity, but presence of RhpA significantly increases the activity on this substrate. Stimulates ATPase activity of RNA helicase RhpA. Involved in stabilization of mRNA but apparently not rRNA. This Helicobacter pylori (strain J99 / ATCC 700824) (Campylobacter pylori J99) protein is Ribonuclease J.